A 4462-amino-acid chain; its full sequence is Dynein axonemal heavy chain 17 (4462 aa).

Positions 1–1808 (MTMAPDVRLE…FANICDAQIQ (1808 aa)) are stem. TPR repeat units follow at residues 1019 to 1052 (TWTD…VSKC) and 1702 to 1736 (IWWT…QLNV). 4 AAA regions span residues 1809 to 2030 (YSYE…VLVV), 2090 to 2311 (KIIK…FGFK), 2417 to 2665 (ELDP…IFQG), and 2763 to 3012 (SYNE…ERRY). ATP contacts are provided by residues 1847–1854 (GPAGTGKT), 2128–2135 (GNAGSGKS), 2455–2462 (GNAGTGKS), and 2801–2808 (GVGGSGKQ). Coiled coils occupy residues 3027–3086 (YQNL…LIQV) and 3257–3309 (DVAP…EKIK). The interval 3027–3313 (YQNLLAKKRT…TAEKIKCQQE (287 aa)) is stalk. 2 AAA regions span residues 3405 to 3632 (LTDD…EIEE) and 3842 to 4068 (IKNF…VLYN). Residues 4147–4182 (PESPYLYGLHPNAEIGFLTVTSEKLFRTVLEMQPKE) form a TPR 3 repeat.

The protein belongs to the dynein heavy chain family. Consists of at least two heavy chains and a number of intermediate and light chains. Expressed in testis. Expressed in spermatozoa (at protein level). Not detected in airway epithelial cells (at protein level).

It localises to the cytoplasm. The protein resides in the cytoskeleton. Its subcellular location is the flagellum axoneme. Force generating protein component of the outer dynein arms (ODAs) in the sperm flagellum. Produces force towards the minus ends of microtubules. Dynein has ATPase activity; the force-producing power stroke is thought to occur on release of ADP. Plays a major role in sperm motility, implicated in sperm flagellar assembly and beating. The protein is Dynein axonemal heavy chain 17 of Homo sapiens (Human).